An 85-amino-acid polypeptide reads, in one-letter code: Small ribosomal subunit protein uS17 (85 aa).

Belongs to the universal ribosomal protein uS17 family. In terms of assembly, part of the 30S ribosomal subunit.

Functionally, one of the primary rRNA binding proteins, it binds specifically to the 5'-end of 16S ribosomal RNA. In Agathobacter rectalis (strain ATCC 33656 / DSM 3377 / JCM 17463 / KCTC 5835 / VPI 0990) (Eubacterium rectale), this protein is Small ribosomal subunit protein uS17.